Consider the following 272-residue polypeptide: Putative pyruvate, phosphate dikinase regulatory protein (272 aa).

ADP is bound at residue 151–158 (GISRTSKT).

The protein belongs to the pyruvate, phosphate/water dikinase regulatory protein family. PDRP subfamily.

It catalyses the reaction N(tele)-phospho-L-histidyl/L-threonyl-[pyruvate, phosphate dikinase] + ADP = N(tele)-phospho-L-histidyl/O-phospho-L-threonyl-[pyruvate, phosphate dikinase] + AMP + H(+). It carries out the reaction N(tele)-phospho-L-histidyl/O-phospho-L-threonyl-[pyruvate, phosphate dikinase] + phosphate + H(+) = N(tele)-phospho-L-histidyl/L-threonyl-[pyruvate, phosphate dikinase] + diphosphate. In terms of biological role, bifunctional serine/threonine kinase and phosphorylase involved in the regulation of the pyruvate, phosphate dikinase (PPDK) by catalyzing its phosphorylation/dephosphorylation. This is Putative pyruvate, phosphate dikinase regulatory protein from Staphylococcus aureus (strain Mu3 / ATCC 700698).